Consider the following 926-residue polypeptide: Probable zinc protease PqqL (926 aa).

His79 contacts Zn(2+). Residue Glu82 is the Proton acceptor of the active site. 2 residues coordinate Zn(2+): His83 and Glu159.

This sequence belongs to the peptidase M16 family. It depends on Zn(2+) as a cofactor.

In Haemophilus influenzae (strain ATCC 51907 / DSM 11121 / KW20 / Rd), this protein is Probable zinc protease PqqL (pqqL).